The following is a 538-amino-acid chain: Putative cysteine ligase BshC (538 aa).

Residues 460–484 (KINEQIELLERMLKRNVEKKHEVEL) are a coiled coil.

The protein belongs to the BshC family.

Functionally, involved in bacillithiol (BSH) biosynthesis. May catalyze the last step of the pathway, the addition of cysteine to glucosamine malate (GlcN-Mal) to generate BSH. The protein is Putative cysteine ligase BshC of Bacillus thuringiensis (strain Al Hakam).